A 227-amino-acid chain; its full sequence is UPF0758 protein Spro_4842 (227 aa).

Residues 105–227 (AMLNPRMTQH…CVSFAERGWL (123 aa)) form the MPN domain. The Zn(2+) site is built by His-176, His-178, and Asp-189. A JAMM motif motif is present at residues 176–189 (HNHPSGKAEPSHAD).

This sequence belongs to the UPF0758 family. YicR subfamily.

This Serratia proteamaculans (strain 568) protein is UPF0758 protein Spro_4842.